A 569-amino-acid polypeptide reads, in one-letter code: Proline--tRNA ligase (569 aa).

The protein belongs to the class-II aminoacyl-tRNA synthetase family. ProS type 1 subfamily. In terms of assembly, homodimer.

It is found in the cytoplasm. It catalyses the reaction tRNA(Pro) + L-proline + ATP = L-prolyl-tRNA(Pro) + AMP + diphosphate. Catalyzes the attachment of proline to tRNA(Pro) in a two-step reaction: proline is first activated by ATP to form Pro-AMP and then transferred to the acceptor end of tRNA(Pro). As ProRS can inadvertently accommodate and process non-cognate amino acids such as alanine and cysteine, to avoid such errors it has two additional distinct editing activities against alanine. One activity is designated as 'pretransfer' editing and involves the tRNA(Pro)-independent hydrolysis of activated Ala-AMP. The other activity is designated 'posttransfer' editing and involves deacylation of mischarged Ala-tRNA(Pro). The misacylated Cys-tRNA(Pro) is not edited by ProRS. In Colwellia psychrerythraea (strain 34H / ATCC BAA-681) (Vibrio psychroerythus), this protein is Proline--tRNA ligase.